We begin with the raw amino-acid sequence, 230 residues long: MVVEDSQKSTITDEQNPSRVDNDDDDLEDGEILEDADDAASAASKPPSAFLRNPHPLENSWTFWFDNPSAKSKQAAWGSSIRPIYTFSTVEEFWSIYNNIHHPSKLGVGADFHCFKHKIEPKWEDPICANGGKWTMTFQRGKSDTSWLYTLLAMIGEQFDYGDEICGAVVNVRNRQDKISIWTKNASNEAAQMSIGKQWKEFLDYNEPIGFIFHEDAKKHERSAKNKYAI.

The segment at 1–53 (MVVEDSQKSTITDEQNPSRVDNDDDDLEDGEILEDADDAASAASKPPSAFLRN) is disordered. A compositionally biased stretch (polar residues) spans 8-19 (KSTITDEQNPSR). Residues 22-38 (NDDDDLEDGEILEDADD) show a composition bias toward acidic residues. Residues 39–49 (AASAASKPPSA) show a composition bias toward low complexity. 2 EIF4G-binding regions span residues 55 to 58 (HPLE) and 65 to 101 (FDNPSAKSKQAAWGSSIRPIYTFSTVEEFWSIYNNIH). MRNA contacts are provided by residues 73–78 (KQAAWG), Lys-105, and 123–124 (WE). A disulfide bridge connects residues Cys-128 and Cys-166. Residues 149–158 (YTLLAMIGEQ) are EIF4G-binding. MRNA-binding positions include 173-178 (RNRQDK) and 218-222 (KKHER).

Belongs to the eukaryotic initiation factor 4E family. As to quaternary structure, EIF4F is a multi-subunit complex, the composition of which varies with external and internal environmental conditions. It is composed of at least EIF4A, EIF4E and EIF4G. EIF4E is also known to interact with other partners. In higher plants two isoforms of EIF4F have been identified, named isoform EIF4F and isoform EIF(iso)4F. Isoform EIF4F has subunits p220 and p26, whereas isoform EIF(iso)4F has subunits p82 and p28. In terms of assembly, (Microbial infection) Interacts with potyvirus viral genome-linked protein (VPg); this interaction is possible in susceptible hosts but impaired in resistant plants. Post-translationally, according to the redox status, the Cys-128-Cys-166 disulfide bridge may have a role in regulating protein function by affecting its ability to bind capped mRNA.

Its subcellular location is the nucleus. The protein localises to the cytoplasm. In terms of biological role, component of the protein complex eIF4F, which is involved in the recognition of the mRNA cap, ATP-dependent unwinding of 5'-terminal secondary structure and recruitment of mRNA to the ribosome. Recognizes and binds the 7-methylguanosine-containing mRNA cap during an early step in the initiation of protein synthesis and facilitates ribosome binding by inducing the unwinding of the mRNAs secondary structures. Key component of recessive resistance to potyviruses. Its function is as follows. (Microbial infection) Susceptibility host factor required for viral infection by recruiting viral RNAs to the host ribosomal complex via an interaction with viral genome-linked protein (VPg). The polypeptide is Eukaryotic translation initiation factor 4E-1 (Phaseolus vulgaris (Kidney bean)).